Here is a 367-residue protein sequence, read N- to C-terminus: Putative F-box/kelch-repeat protein At4g39600 (367 aa).

Residues 11-57 form the F-box domain; it reads ATSNPSLPEDLVVSCLARVSRLYYPTLSLVSKSFRSLIASPDLYKTR. 2 Kelch repeats span residues 127–171 and 172–216; these read HLYA…LDGK and MYLA…EGKI.

This is Putative F-box/kelch-repeat protein At4g39600 from Arabidopsis thaliana (Mouse-ear cress).